The following is an 815-amino-acid chain: Phosphate transporter PHO1-2 (815 aa).

At 1–421 the chain is on the cytoplasmic side; the sequence is MVKFSREYEA…QQPRNTHMIT (421 aa). The 367-residue stretch at 2-368 folds into the SPX domain; it reads VKFSREYEAS…EQQRATDLFS (367 aa). Disordered regions lie at residues 83-108, 166-213, and 242-266; these read SAGQ…STDK, RGLA…LELQ, and AGKK…GGGG. Residues 97–108 show a composition bias toward basic and acidic residues; it reads PDRGELVRSTDK. The segment covering 183–201 has biased composition (low complexity); the sequence is PPSSVHGSSGRYLLSGLSS. The span at 202–213 shows a compositional bias: polar residues; sequence PQSMSDGSLELQ. The segment covering 243 to 254 has biased composition (basic and acidic residues); it reads GKKDGKTKDGSG. A compositionally biased stretch (gly residues) spans 255-266; sequence KGRGGGGGGGGG. The helical transmembrane segment at 422-442 threads the bilayer; that stretch reads FLVGLFTGTFVSLFIIYAILA. Residues 443–458 are Extracellular-facing; the sequence is HVSGIFTSTGNSAYME. Residues 459-479 form a helical membrane-spanning segment; the sequence is IVYHVFSMFALISLHIFLYGC. The Cytoplasmic portion of the chain corresponds to 480–508; it reads NLFMWKNTRINHNFIFDFSSNTALTHRDA. Residues 509–529 form a helical membrane-spanning segment; it reads FLMSASIMCTVVAALVINLFL. Over 530-538 the chain is Extracellular; that stretch reads KNAGVAYAN. A helical membrane pass occupies residues 539-559; it reads ALPGALLLLSTGVLFCPFDIF. The Cytoplasmic portion of the chain corresponds to 560 to 686; it reads YRSTRYCFMR…VRFKYAATPT (127 aa). The EXS domain occupies 624–815; that stretch reads TSGQQYKHLA…PLPFRELETD (192 aa). A helical transmembrane segment spans residues 687–707; that stretch reads PFWVWMVIISSSGATIYQLYW. The Extracellular portion of the chain corresponds to 708–734; the sequence is DFVKDWGFLNPKSKNRWLRNELILKNK. Residues 735–751 form a helical membrane-spanning segment; it reads SIYYVSMMLNLALRLAW. The Cytoplasmic portion of the chain corresponds to 752 to 815; the sequence is TESVMKIHIG…PLPFRELETD (64 aa).

This sequence belongs to the SYG1 (TC 2.A.94) family. In terms of tissue distribution, specifically expressed in roots.

Its subcellular location is the cell membrane. Functionally, involved in the transfer of inorganic phosphate (Pi) from roots to shoots. The polypeptide is Phosphate transporter PHO1-2 (PHO1-2) (Oryza sativa subsp. japonica (Rice)).